The primary structure comprises 127 residues: MYRTMMSGKLHRATVTEANLNYVGSITIDEDLIDAVGMLPNEKVQIVNNNNGARLETYIIPGKRGSGVICLNGAAARLVQEGDKVIIISYKMMSDQEAASHEPKVAVLNDQNKIEQMLGNEPARTIL.

S25 serves as the catalytic Schiff-base intermediate with substrate; via pyruvic acid. S25 carries the post-translational modification Pyruvic acid (Ser). T57 lines the substrate pocket. Y58 (proton donor) is an active-site residue. Residue G73–A75 coordinates substrate.

The protein belongs to the PanD family. Heterooctamer of four alpha and four beta subunits. The cofactor is pyruvate. In terms of processing, is synthesized initially as an inactive proenzyme, which is activated by self-cleavage at a specific serine bond to produce a beta-subunit with a hydroxyl group at its C-terminus and an alpha-subunit with a pyruvoyl group at its N-terminus.

Its subcellular location is the cytoplasm. It catalyses the reaction L-aspartate + H(+) = beta-alanine + CO2. The protein operates within cofactor biosynthesis; (R)-pantothenate biosynthesis; beta-alanine from L-aspartate: step 1/1. Catalyzes the pyruvoyl-dependent decarboxylation of aspartate to produce beta-alanine. The chain is Aspartate 1-decarboxylase from Bacillus subtilis (strain 168).